The sequence spans 751 residues: Photosystem I P700 chlorophyll a apoprotein A1 (751 aa).

8 helical membrane-spanning segments follow: residues 73 to 96 (VFSA…FHGA), 159 to 182 (LYST…WHYH), 198 to 222 (MNHH…HIAL), 294 to 312 (MAHH…GHQY), 349 to 372 (WHAQ…HHMY), 388 to 414 (LSLF…IFMV), 436 to 458 (AIIS…LYIH), and 533 to 551 (FMVH…LILL). Positions 575 and 584 each coordinate [4Fe-4S] cluster. 2 helical membrane-spanning segments follow: residues 591–612 (HVFL…HFSW) and 665–687 (LSAY…MFLF). Histidine 676 lines the chlorophyll a' pocket. The chlorophyll a site is built by methionine 684 and tyrosine 692. Tryptophan 693 serves as a coordination point for phylloquinone. Residues 725–745 (AVGVAHYLLGGIATTWSFFLA) form a helical membrane-spanning segment.

This sequence belongs to the PsaA/PsaB family. In terms of assembly, the PsaA/B heterodimer binds the P700 chlorophyll special pair and subsequent electron acceptors. PSI consists of a core antenna complex that captures photons, and an electron transfer chain that converts photonic excitation into a charge separation. The eukaryotic PSI reaction center is composed of at least 11 subunits. P700 is a chlorophyll a/chlorophyll a' dimer, A0 is one or more chlorophyll a, A1 is one or both phylloquinones and FX is a shared 4Fe-4S iron-sulfur center. is required as a cofactor.

The protein resides in the plastid. Its subcellular location is the chloroplast thylakoid membrane. The catalysed reaction is reduced [plastocyanin] + hnu + oxidized [2Fe-2S]-[ferredoxin] = oxidized [plastocyanin] + reduced [2Fe-2S]-[ferredoxin]. Functionally, psaA and PsaB bind P700, the primary electron donor of photosystem I (PSI), as well as the electron acceptors A0, A1 and FX. PSI is a plastocyanin/cytochrome c6-ferredoxin oxidoreductase, converting photonic excitation into a charge separation, which transfers an electron from the donor P700 chlorophyll pair to the spectroscopically characterized acceptors A0, A1, FX, FA and FB in turn. Oxidized P700 is reduced on the lumenal side of the thylakoid membrane by plastocyanin or cytochrome c6. The chain is Photosystem I P700 chlorophyll a apoprotein A1 from Ostreococcus tauri.